The sequence spans 410 residues: Platelet-activating factor acetylhydrolase IB subunit beta (410 aa).

Residues 1–38 (MVLSQRQRDELNRAIADYLRSNGYEEAYSVFKKEAELD) are required for self-association and interaction with PAFAH1B2 and PAFAH1B3. The interaction with NDE1 stretch occupies residues 1–66 (MVLSQRQRDE…SVIRLQKKVM (66 aa)). Positions 1-102 (MVLSQRQRDE…EWIPRPPEKY (102 aa)) are interaction with NDEL1. Residues 7–39 (QRDELNRAIADYLRSNGYEEAYSVFKKEAELDM) enclose the LisH domain. K53 is subject to N6-acetyllysine. A coiled-coil region spans residues 56-82 (TSVIRLQKKVMELESKLNEAKEEFTSG). Residues 83–410 (GPLGQKRDPK…DQTVKVWECR (328 aa)) are interaction with dynein and dynactin. WD repeat units follow at residues 106–147 (GHRS…RTLK), 148–187 (GHTD…CIRT), 190–229 (GHDH…CVKT), 232–271 (GHRE…CKAE), 274–333 (EHEH…CLMT), 336–377 (GHDN…KTLN), and 378–410 (AHEH…WECR). Residue S109 is modified to Phosphoserine. The segment at 367-409 (YKNKRCMKTLNAHEHFVTSLDFHKTAPYVVTGSVDQTVKVWEC) is interaction with DCX. An interaction with NDEL1 region spans residues 388-410 (FHKTAPYVVTGSVDQTVKVWECR).

Belongs to the WD repeat LIS1/nudF family. As to quaternary structure, can self-associate. Component of the cytosolic PAF-AH (I) heterotetrameric enzyme, which is composed of PAFAH1B1 (beta), PAFAH1B2 (alpha2) and PAFAH1B3 (alpha1) subunits. The catalytic activity of the enzyme resides in the alpha1 (PAFAH1B3) and alpha2 (PAFAH1B2) subunits, whereas the beta subunit (PAFAH1B1) has regulatory activity. Trimer formation is not essential for the catalytic activity. Interacts with the catalytic dimer of PAF-AH (I) heterotetrameric enzyme: interacts with PAFAH1B2 homodimer (alpha2/alpha2 homodimer), PAFAH1B3 homodimer (alpha1/alpha1 homodimer) and PAFAH1B2-PAFAH1B3 heterodimer (alpha2/alpha1 heterodimer). Interacts with DCX, dynein, dynactin, IQGAP1, KATNB1, NDE1, NDEL1, NUDC and RSN. Interacts with DISC1, and this interaction is enhanced by NDEL1. Interacts with DAB1 when DAB1 is phosphorylated in response to RELN/reelin signaling. Interacts with INTS13. Interacts with DCDC1.

It is found in the cytoplasm. The protein localises to the cytoskeleton. It localises to the microtubule organizing center. Its subcellular location is the centrosome. The protein resides in the spindle. It is found in the nucleus membrane. Its function is as follows. Regulatory subunit (beta subunit) of the cytosolic type I platelet-activating factor (PAF) acetylhydrolase (PAF-AH (I)), an enzyme that catalyzes the hydrolyze of the acetyl group at the sn-2 position of PAF and its analogs and participates in PAF inactivation. Regulates the PAF-AH (I) activity in a catalytic dimer composition-dependent manner. Positively regulates the activity of the minus-end directed microtubule motor protein dynein. May enhance dynein-mediated microtubule sliding by targeting dynein to the microtubule plus end. Required for several dynein- and microtubule-dependent processes such as the maintenance of Golgi integrity, the peripheral transport of microtubule fragments and the coupling of the nucleus and centrosome. Required during brain development for the proliferation of neuronal precursors and the migration of newly formed neurons from the ventricular/subventricular zone toward the cortical plate. Neuronal migration involves a process called nucleokinesis, whereby migrating cells extend an anterior process into which the nucleus subsequently translocates. During nucleokinesis dynein at the nuclear surface may translocate the nucleus towards the centrosome by exerting force on centrosomal microtubules. Also required for proper activation of Rho GTPases and actin polymerization at the leading edge of locomoting cerebellar neurons and postmigratory hippocampal neurons in response to calcium influx triggered via NMDA receptors. May also play a role in other forms of cell locomotion including the migration of fibroblasts during wound healing. Required for dynein recruitment to microtubule plus ends and BICD2-bound cargos. May modulate the Reelin pathway through interaction of the PAF-AH (I) catalytic dimer with VLDLR. The protein is Platelet-activating factor acetylhydrolase IB subunit beta of Felis catus (Cat).